The sequence spans 1012 residues: RNA-binding protein 26 (1012 aa).

Lys-94 is covalently cross-linked (Glycyl lysine isopeptide (Lys-Gly) (interchain with G-Cter in SUMO2)). Residues 98 to 127 are a coiled coil; that stretch reads LQHQEKDIKKEELTKEEEREKKFSRRLNHS. Residue Lys-106 forms a Glycyl lysine isopeptide (Lys-Gly) (interchain with G-Cter in SUMO1); alternate linkage. Residue Lys-106 forms a Glycyl lysine isopeptide (Lys-Gly) (interchain with G-Cter in SUMO2); alternate linkage. A compositionally biased stretch (basic and acidic residues) spans 106 to 118; sequence KKEELTKEEEREK. Residues 106–236 are disordered; that stretch reads KKEELTKEEE…PLENNYTPVS (131 aa). Ser-127 is modified (phosphoserine). Basic and acidic residues predominate over residues 134-168; the sequence is RYRDNRSRDERKKDDRSRKRDYDRNPPRRDSYRDR. A compositionally biased stretch (basic residues) spans 169 to 186; that stretch reads YNRRRGRSRSYSRSRSRS. Composition is skewed to basic and acidic residues over residues 187-201 and 209-227; these read WSKE…DRSR and RSRE…RTDP. A C3H1-type zinc finger spans residues 288–316; it reads PMPKKRCRDYDEKGFCMRGDMCPFDHGSD. Positions 334-388 are enriched in pro residues; it reads QPPVVEGPPPPGLPPPPPILTPPPVNLRPPVPPPGPLPPSLPPVTGPPPPLPPLQ. 2 disordered regions span residues 334 to 404 and 465 to 520; these read QPPV…SSVP and IGLT…NFNR. A compositionally biased stretch (low complexity) spans 394–404; that stretch reads APPNSATSSVP. Position 501 is a phosphoserine (Ser-501). An N6-acetyllysine modification is found at Lys-515. Residue Ser-523 is modified to Phosphoserine. The RRM 1 domain occupies 537–611; sequence TKLELRKVPP…RFIKVYWHRE (75 aa). Position 621 is a phosphoserine (Ser-621). The segment at 647–667 is disordered; the sequence is PVPSATTEPAEAQSATSELPQ. Coiled coils occupy residues 724 to 800 and 828 to 852; these read DNNE…KSTS and KKMQ…EAAK. A disordered region spans residues 858-889; that stretch reads SGRGRGIHTRGRGTAHGRGRGRGRGRGVPGHA. The span at 862-882 shows a compositional bias: basic residues; that stretch reads RGIHTRGRGTAHGRGRGRGRG. The RRM 2 domain occupies 896–965; that stretch reads RALEISAFTE…QDLKLAWNKP (70 aa). Positions 970 to 1012 are disordered; it reads SAVDTEEAEPDEEEFQEESLVDDSLLQDDDEEEEDNESRSWRR. Acidic residues predominate over residues 973–1005; sequence DTEEAEPDEEEFQEESLVDDSLLQDDDEEEEDN.

In terms of tissue distribution, expressed in testis and ovary.

Its function is as follows. May be involved in the turnover of nuclear polyadenylated (pA+) RNA. This is RNA-binding protein 26 from Mus musculus (Mouse).